A 231-amino-acid polypeptide reads, in one-letter code: Orotate phosphoribosyltransferase (231 aa).

Residues K27, 79–80 (YK), R106, K107, K110, H112, and 133–141 (DDVMTAGTA) each bind 5-phospho-alpha-D-ribose 1-diphosphate. T137 and R166 together coordinate orotate.

It belongs to the purine/pyrimidine phosphoribosyltransferase family. PyrE subfamily. As to quaternary structure, homodimer. Requires Mg(2+) as cofactor.

The enzyme catalyses orotidine 5'-phosphate + diphosphate = orotate + 5-phospho-alpha-D-ribose 1-diphosphate. Its pathway is pyrimidine metabolism; UMP biosynthesis via de novo pathway; UMP from orotate: step 1/2. In terms of biological role, catalyzes the transfer of a ribosyl phosphate group from 5-phosphoribose 1-diphosphate to orotate, leading to the formation of orotidine monophosphate (OMP). The chain is Orotate phosphoribosyltransferase from Bifidobacterium longum (strain NCC 2705).